The following is a 1035-amino-acid chain: Valine--tRNA ligase (1035 aa).

Positions 45-55 (PNVTGALHLGH) match the 'HIGH' region motif. The stretch at 253–281 (EKLSDANEKEAVDLNKQIEALQKRREERL) forms a coiled coil. K619 contributes to the ATP binding site. Positions 967-1035 (DVEAELARLE…QDILKLQSKK (69 aa)) form a coiled coil.

It belongs to the class-I aminoacyl-tRNA synthetase family. ValS type 1 subfamily. Monomer.

It is found in the cytoplasm. It catalyses the reaction tRNA(Val) + L-valine + ATP = L-valyl-tRNA(Val) + AMP + diphosphate. In terms of biological role, catalyzes the attachment of valine to tRNA(Val). As ValRS can inadvertently accommodate and process structurally similar amino acids such as threonine, to avoid such errors, it has a 'posttransfer' editing activity that hydrolyzes mischarged Thr-tRNA(Val) in a tRNA-dependent manner. This Rhodopirellula baltica (strain DSM 10527 / NCIMB 13988 / SH1) protein is Valine--tRNA ligase.